The sequence spans 712 residues: MTPIVKQFKYGQHTVTLETGAIARQATAAVMASMDDTTVFVSVVAKKEVKEGQDFFPLTVNYQERTYAAGRIPGGFFKREGRPSENETLIARLIDRPIRPLFPEGFFNEIQIVATVVSVNPQISPDLVAMIGASAALSLSGVPFNGPIGAARVGFINDQFVLNPTITEQKQSRLDLVVAGTDKAVLMVESEADILSEEQMLAAVVFGHQQQQIVIENIKEFVKEAGKPRWDWQPAEANTALINQVKALAETRIGDAYRITEKQARYEQIDAIKADVIAQLTAQDETISEGAIIDIITALESSVVRGRILAGEPRIDGRTVDTVRALNICTGVLPRTHGSAIFTRGETQALAVATLGTERDAQIIDELTGEKSDRFLFHYNFPPYSVGETGMIGSPKRREIGHGRLAKRGVLAVMPSAEEFPYVVRVVSEITESNGSSSMASVCGASLALMDAGVPIKATVAGIAMGLVKEDEKFVVLSDILGDEDHLGDMDFKVAGTRKGITALQMDIKIEGITPEIMHIALNQAKGARMHILNVMEQALPAPRADLSDFAPRIHTMKIDPKKIKDVIGKGGAVIRSLTEETGTSIDIDDDGTVKIAATDNNAAKMVMSRIEEIVAEVEVNAIYTGKVSRVVDFGAFVTILGGKEGLVHISQITDARVERVSDYLSVGQEVNVKVVEIDRQNRIRLTMKDLDNNLSTNVTPEAVVQEESTEN.

Positions 485 and 491 each coordinate Mg(2+). Residues 552–611 (PRIHTMKIDPKKIKDVIGKGGAVIRSLTEETGTSIDIDDDGTVKIAATDNNAAKMVMSRI) form the KH domain. An S1 motif domain is found at 621–689 (NAIYTGKVSR…RQNRIRLTMK (69 aa)).

It belongs to the polyribonucleotide nucleotidyltransferase family. In terms of assembly, component of the RNA degradosome, which is a multiprotein complex involved in RNA processing and mRNA degradation. It depends on Mg(2+) as a cofactor.

It localises to the cytoplasm. The enzyme catalyses RNA(n+1) + phosphate = RNA(n) + a ribonucleoside 5'-diphosphate. In terms of biological role, involved in mRNA degradation. Catalyzes the phosphorolysis of single-stranded polyribonucleotides processively in the 3'- to 5'-direction. This Haemophilus ducreyi (strain 35000HP / ATCC 700724) protein is Polyribonucleotide nucleotidyltransferase.